A 271-amino-acid polypeptide reads, in one-letter code: Formamidopyrimidine-DNA glycosylase (271 aa).

The active-site Schiff-base intermediate with DNA is proline 2. Glutamate 3 serves as the catalytic Proton donor. Catalysis depends on lysine 58, which acts as the Proton donor; for beta-elimination activity. 3 residues coordinate DNA: histidine 91, arginine 110, and arginine 152. An FPG-type zinc finger spans residues 237–271; it reads WVYGRAGQSCRQCGELVSKTRQGQRSTFFCARCQH. Arginine 261 functions as the Proton donor; for delta-elimination activity in the catalytic mechanism.

The protein belongs to the FPG family. In terms of assembly, monomer. It depends on Zn(2+) as a cofactor.

The catalysed reaction is Hydrolysis of DNA containing ring-opened 7-methylguanine residues, releasing 2,6-diamino-4-hydroxy-5-(N-methyl)formamidopyrimidine.. The enzyme catalyses 2'-deoxyribonucleotide-(2'-deoxyribose 5'-phosphate)-2'-deoxyribonucleotide-DNA = a 3'-end 2'-deoxyribonucleotide-(2,3-dehydro-2,3-deoxyribose 5'-phosphate)-DNA + a 5'-end 5'-phospho-2'-deoxyribonucleoside-DNA + H(+). Involved in base excision repair of DNA damaged by oxidation or by mutagenic agents. Acts as a DNA glycosylase that recognizes and removes damaged bases. Has a preference for oxidized purines, such as 7,8-dihydro-8-oxoguanine (8-oxoG). Has AP (apurinic/apyrimidinic) lyase activity and introduces nicks in the DNA strand. Cleaves the DNA backbone by beta-delta elimination to generate a single-strand break at the site of the removed base with both 3'- and 5'-phosphates. This chain is Formamidopyrimidine-DNA glycosylase, found in Nitrosomonas europaea (strain ATCC 19718 / CIP 103999 / KCTC 2705 / NBRC 14298).